We begin with the raw amino-acid sequence, 526 residues long: Na(+)/H(+) antiporter NhaB (526 aa).

Helical transmembrane passes span 25–45, 52–72, 89–109, 139–159, 204–224, 240–260, 305–325, 355–375, 391–411, 448–468, and 479–499; these read IIAFLIFNPILFMADPYIAGW, IFTLAMALKCYPLQPGGLLLI, IVVNIEVVLLLVFMVAGIYFM, AFLSAFLDALTVVAVIIAVGM, LMMHAAVGTALGGVMTMVGEP, FFVRMSPVTIPVFFAGIATTF, GFIGIWLVIGLAGHFAAVGLI, FTALLCVFFGVVAVIIDQGLF, LVMFYLANGALSMVSDNVFVG, VATPNGQAAFLFLLTSAIAPL, and MALPYTIVLTIVGLAATYFGL.

This sequence belongs to the NhaB Na(+)/H(+) (TC 2.A.34) antiporter family.

The protein localises to the cell inner membrane. The enzyme catalyses 2 Na(+)(in) + 3 H(+)(out) = 2 Na(+)(out) + 3 H(+)(in). In terms of biological role, na(+)/H(+) antiporter that extrudes sodium in exchange for external protons. The protein is Na(+)/H(+) antiporter NhaB of Pseudoalteromonas atlantica (strain T6c / ATCC BAA-1087).